Consider the following 235-residue polypeptide: Phosphate-specific transport system accessory protein PhoU homolog 2 (235 aa).

The protein belongs to the PhoU family. As to quaternary structure, homodimer.

It localises to the cytoplasm. Its function is as follows. Plays a role in the regulation of phosphate uptake. This Thermotoga maritima (strain ATCC 43589 / DSM 3109 / JCM 10099 / NBRC 100826 / MSB8) protein is Phosphate-specific transport system accessory protein PhoU homolog 2 (phoU2).